A 365-amino-acid polypeptide reads, in one-letter code: 3-isopropylmalate dehydrogenase (365 aa).

78–91 contributes to the NAD(+) binding site; that stretch reads GKKWNNLPIEKRPE. Positions 99, 109, 139, and 228 each coordinate substrate. Positions 228, 252, and 256 each coordinate Mg(2+). 286–298 contacts NAD(+); it reads GSAPDIAGKNIAN.

Belongs to the isocitrate and isopropylmalate dehydrogenases family. LeuB type 1 subfamily. In terms of assembly, homodimer. Mg(2+) serves as cofactor. Requires Mn(2+) as cofactor.

It is found in the cytoplasm. The catalysed reaction is (2R,3S)-3-isopropylmalate + NAD(+) = 4-methyl-2-oxopentanoate + CO2 + NADH. It functions in the pathway amino-acid biosynthesis; L-leucine biosynthesis; L-leucine from 3-methyl-2-oxobutanoate: step 3/4. In terms of biological role, catalyzes the oxidation of 3-carboxy-2-hydroxy-4-methylpentanoate (3-isopropylmalate) to 3-carboxy-4-methyl-2-oxopentanoate. The product decarboxylates to 4-methyl-2 oxopentanoate. In Buchnera aphidicola subsp. Macrosiphoniella ludovicianae, this protein is 3-isopropylmalate dehydrogenase.